A 377-amino-acid chain; its full sequence is Membrane progestin receptor epsilon (377 aa).

The interval M1 to S40 is disordered. The Cytoplasmic segment spans residues M1–N86. Low complexity predominate over residues G9 to A26. A helical transmembrane segment spans residues F87 to L107. Residues S108–H116 lie on the Extracellular side of the membrane. A helical transmembrane segment spans residues P117–C137. Topologically, residues T138–S162 are cytoplasmic. Residues Y163–L183 form a helical membrane-spanning segment. The Extracellular segment spans residues D184–L205. The helical transmembrane segment at I206–V226 threads the bilayer. Residues A227 to R243 are Cytoplasmic-facing. The chain crosses the membrane as a helical span at residues T244 to F264. Residues D265–P301 lie on the Extracellular side of the membrane. The helical transmembrane segment at G302–I322 threads the bilayer. Residues Y323–A343 are Cytoplasmic-facing. Residues P344–I364 traverse the membrane as a helical segment. Over R365–K377 the chain is Extracellular.

Belongs to the ADIPOR family. As to quaternary structure, homodimer. In terms of tissue distribution, expression levels vary widely in a range of tissues. Expressed in the brain, at high level in the pituitary gland and also in hypothalamus, limbic system, caudate nucleus accumens, pons and olfactory bulb.

It is found in the cell membrane. In terms of biological role, plasma membrane progesterone (P4) receptor coupled to G proteins. Seems to act through a G(s) mediated pathway. May be involved in regulating rapid P4 signaling in the nervous system. Also binds dehydroepiandrosterone (DHEA), pregnanolone, pregnenolone and allopregnanolone. The chain is Membrane progestin receptor epsilon from Homo sapiens (Human).